The sequence spans 166 residues: Short form salivary protein D7R5 (166 aa).

Positions Met-1–Ala-22 are cleaved as a signal peptide. Disulfide bonds link Cys-26–Cys-58, Cys-39–Cys-166, and Cys-98–Cys-117.

It belongs to the PBP/GOBP family.

It localises to the secreted. In contrast to the related D7 salivary proteins, does not bind biogenic amines such as serotonin, noradrenaline, histamine and adrenaline. It is hypothesized that either D7r5 evolved an as yet unknown function or is becoming a pseudogene. This Anopheles gambiae (African malaria mosquito) protein is Short form salivary protein D7R5.